The sequence spans 734 residues: Photosystem I P700 chlorophyll a apoprotein A2 (734 aa).

8 helical membrane passes run 46-69 (IFASHFGQLAIIFLWTSGNLFHVA), 135-158 (LYTGALFLLFLSALSLIGGWLHLQ), 175-199 (LNHHLSGLFGVSSLAWTGHLVHVAI), 273-291 (MAHHHLAIAILFLIAGHMY), 330-353 (IHFQLGLALASLGVITSLVAQHMY), 369-395 (AALYTHHQYIAGFIMTGAFAHGAIFFI), 417-439 (AIISHLSWASLFLGFHTLGLYVH), and 517-535 (FLVHHAIALGLHTTTLILV). Cysteine 559 and cysteine 568 together coordinate [4Fe-4S] cluster. 2 helical membrane passes run 575–596 (AFYLAVFWMLNTIGWVTFYWHW) and 643–665 (LSVWAWMFLFGHLVWATGFMFLI). The chlorophyll a site is built by histidine 654, methionine 662, and tyrosine 670. Tryptophan 671 is a binding site for phylloquinone. A helical transmembrane segment spans residues 707 to 727 (LVGLAHFSVGYIFTYAAFLIA).

It belongs to the PsaA/PsaB family. In terms of assembly, the PsaA/B heterodimer binds the P700 chlorophyll special pair and subsequent electron acceptors. PSI consists of a core antenna complex that captures photons, and an electron transfer chain that converts photonic excitation into a charge separation. The eukaryotic PSI reaction center is composed of at least 11 subunits. The cofactor is P700 is a chlorophyll a/chlorophyll a' dimer, A0 is one or more chlorophyll a, A1 is one or both phylloquinones and FX is a shared 4Fe-4S iron-sulfur center..

The protein resides in the plastid. It localises to the chloroplast thylakoid membrane. It carries out the reaction reduced [plastocyanin] + hnu + oxidized [2Fe-2S]-[ferredoxin] = oxidized [plastocyanin] + reduced [2Fe-2S]-[ferredoxin]. Functionally, psaA and PsaB bind P700, the primary electron donor of photosystem I (PSI), as well as the electron acceptors A0, A1 and FX. PSI is a plastocyanin-ferredoxin oxidoreductase, converting photonic excitation into a charge separation, which transfers an electron from the donor P700 chlorophyll pair to the spectroscopically characterized acceptors A0, A1, FX, FA and FB in turn. Oxidized P700 is reduced on the lumenal side of the thylakoid membrane by plastocyanin. This Arabis hirsuta (Hairy rock-cress) protein is Photosystem I P700 chlorophyll a apoprotein A2.